Here is a 166-residue protein sequence, read N- to C-terminus: uncharacterized protein (166 aa).

3 stretches are compositionally biased toward basic and acidic residues: residues 1 to 13, 21 to 112, and 119 to 137; these read MAEV…EHNS, KAND…KTKE, and DNVE…KEGG. Residues 1–144 are disordered; the sequence is MAEVSKKRCE…EGGSKAWNKT (144 aa). 8 repeat units span residues 31-41, 42-52, 53-63, 64-74, 75-85, 86-96, 97-107, and 108-118. The tract at residues 31–118 is 8 X 11 AA approximate tandem repeats of D-K-T-K-E-T-A-G/E-S-A-K; that stretch reads DKTKETAGSA…KTKETAGNVR (88 aa).

Belongs to the LEA type 1 family.

This is an uncharacterized protein from Encephalitozoon cuniculi (strain GB-M1) (Microsporidian parasite).